A 72-amino-acid chain; its full sequence is UPF0426 protein asl4034 (72 aa).

Belongs to the UPF0426 family.

This is UPF0426 protein asl4034 from Nostoc sp. (strain PCC 7120 / SAG 25.82 / UTEX 2576).